We begin with the raw amino-acid sequence, 505 residues long: Glutamate--tRNA ligase (505 aa).

Residues 12-22 (PSPTGDPHVGT) carry the 'HIGH' region motif. The short motif at 253–257 (KLSKR) is the 'KMSKS' region element. Lys-256 provides a ligand contact to ATP.

Belongs to the class-I aminoacyl-tRNA synthetase family. Glutamate--tRNA ligase type 1 subfamily. In terms of assembly, monomer.

Its subcellular location is the cytoplasm. The catalysed reaction is tRNA(Glu) + L-glutamate + ATP = L-glutamyl-tRNA(Glu) + AMP + diphosphate. Functionally, catalyzes the attachment of glutamate to tRNA(Glu) in a two-step reaction: glutamate is first activated by ATP to form Glu-AMP and then transferred to the acceptor end of tRNA(Glu). This chain is Glutamate--tRNA ligase, found in Chlamydia abortus (strain DSM 27085 / S26/3) (Chlamydophila abortus).